The primary structure comprises 259 residues: Putative protein phosphatase (259 aa).

The PPM-type phosphatase domain maps to 8–255 (LFASLSKKGP…DNITLNLINL (248 aa)).

The enzyme catalyses O-phospho-L-seryl-[protein] + H2O = L-seryl-[protein] + phosphate. It carries out the reaction O-phospho-L-threonyl-[protein] + H2O = L-threonyl-[protein] + phosphate. This is Putative protein phosphatase from Mycoplasma pneumoniae (strain ATCC 29342 / M129 / Subtype 1) (Mycoplasmoides pneumoniae).